The following is a 60-amino-acid chain: Large ribosomal subunit protein uL30 (60 aa).

It belongs to the universal ribosomal protein uL30 family. Part of the 50S ribosomal subunit.

The polypeptide is Large ribosomal subunit protein uL30 (Desulfitobacterium hafniense (strain DSM 10664 / DCB-2)).